Here is a 93-residue protein sequence, read N- to C-terminus: Small ribosomal subunit protein uS19 (93 aa).

The protein belongs to the universal ribosomal protein uS19 family.

Protein S19 forms a complex with S13 that binds strongly to the 16S ribosomal RNA. The chain is Small ribosomal subunit protein uS19 from Mycobacterium tuberculosis (strain ATCC 25177 / H37Ra).